The sequence spans 141 residues: Cystatin (141 aa).

The first 26 residues, 1–26, serve as a signal peptide directing secretion; that stretch reads MVHSQLPVAGPLRLLCALLLLPSATM. The Cystatin domain maps to 29 to 129; the sequence is GGLSPRSVTD…CHFQVWSRPW (101 aa). The Secondary area of contact signature appears at 73–77; that stretch reads QVVSG. Intrachain disulfides connect Cys-91-Cys-107 and Cys-120-Cys-140.

The protein belongs to the cystatin family. In terms of tissue distribution, expressed at a low level by the venom gland (at protein level).

It is found in the secreted. Inhibits various C1 cysteine proteases including cathepsin L, papain and cathepsin B. This protein has no toxic activity and its function in the venom is unknown. It may play a role as a housekeeping or regulatory protein. In Pseudechis australis (Mulga snake), this protein is Cystatin.